The following is a 57-amino-acid chain: Conotoxin reg3.17 (57 aa).

The N-terminal stretch at 1 to 16 is a signal peptide; the sequence is TICLLLFPLTVVPLDG. Residues 17-44 constitute a propeptide that is removed on maturation; the sequence is DQPAHQPAVRKHNIKSAVQLRQWDEEQQ. Cystine bridges form between C45–C57, C46–C53, and C50–C56.

Belongs to the conotoxin M superfamily. Expressed by the venom duct.

Its subcellular location is the secreted. The protein is Conotoxin reg3.17 of Conus regius (Crown cone).